The sequence spans 706 residues: Zinc finger CCCH domain-containing protein 56 (706 aa).

ANK repeat units lie at residues 83–113 (EQRT…ELNL) and 118–150 (DKST…DPNI). Over residues 211-221 (SSLLSLDSVSS) the composition is skewed to low complexity. Residues 211–235 (SSLLSLDSVSSPTKPHGTDVTFASE) are disordered. 2 C3H1-type zinc fingers span residues 302–324 (PCPD…HGVF) and 332–356 (QYRT…HANE). Disordered stretches follow at residues 396–427 (PSAA…QQNI), 545–616 (SPKN…QTHG), and 652–692 (QMLK…TRES). Composition is skewed to polar residues over residues 397–427 (SAAQ…QQNI) and 545–560 (SPKN…QASS). Residue Ser-568 is modified to Phosphoserine. The segment covering 580–592 (SRSLSSRDFGSSL) has biased composition (low complexity). Composition is skewed to polar residues over residues 600–616 (DSGS…QTHG), 652–667 (QMLK…NRVV), and 677–686 (QGGSSVNPHN).

The chain is Zinc finger CCCH domain-containing protein 56 from Arabidopsis thaliana (Mouse-ear cress).